The following is a 177-amino-acid chain: UPF0177 protein YxdF (177 aa).

4 consecutive transmembrane segments (helical) span residues 2-22 (TLVLILIFIIAWKLGYLKNTL), 30-50 (IFWLMGIVFFTLATNYLVTVL), 117-137 (ALVHTGFSWYLLPYLILSFII), and 152-172 (IVHSSVNLFGGSAIKLLDTFF).

It belongs to the UPF0177 family.

It is found in the cell membrane. This Lactococcus lactis subsp. lactis (strain IL1403) (Streptococcus lactis) protein is UPF0177 protein YxdF (yxdF).